The following is a 37-amino-acid chain: Photosystem I reaction center subunit VIII (37 aa).

Residues leucine 7 to leucine 27 traverse the membrane as a helical segment.

This sequence belongs to the PsaI family.

The protein localises to the plastid. The protein resides in the chloroplast thylakoid membrane. Its function is as follows. May help in the organization of the PsaL subunit. This chain is Photosystem I reaction center subunit VIII, found in Morus indica (Mulberry).